The chain runs to 376 residues: Multiphosphoryl transfer protein (376 aa).

The PTS EIIA type-2 domain maps to 2–142 (FQLSVQDIHP…EELRALLMGE (141 aa)). His62 acts as the Tele-phosphohistidine intermediate; for EIIA activity in catalysis. His62 is subject to Phosphohistidine; by HPr. Residues 156–284 (TLDVIASSLV…LTSDDALTDD (129 aa)) are m domain. The HPr domain maps to 285-375 (VLSAEFVVRN…DAIAAGLGEG (91 aa)). The active-site Pros-phosphohistidine intermediate; for HPr activity is the His299. His299 carries the phosphohistidine; by EI modification.

It localises to the cytoplasm. Functionally, the phosphoenolpyruvate-dependent sugar phosphotransferase system (sugar PTS), a major carbohydrate active transport system, catalyzes the phosphorylation of incoming sugar substrates concomitantly with their translocation across the cell membrane. The enzyme II FruAB PTS system is involved in fructose transport. The polypeptide is Multiphosphoryl transfer protein (fruB) (Salmonella typhimurium (strain LT2 / SGSC1412 / ATCC 700720)).